The following is a 237-amino-acid chain: MNINPFANVSLQDYLEIVQIVDSTFPIGSFNHSFGMENYLREDTVTDDKGYEEWQEAYLASQFKYGEGLVIKLVYDAMATDNLEQVWHYDKVLTVSTQARETRQGTKMIAKQMLRLIQRLHAIPVLDDYQSKIRKGEVFGNPAIVFALYVFNKGLGCSEAIALYGYSVISTMVQNAVRAIPLGQFAGQEIVLRSFSQLEKMTQEIQELDASYLGANTPGLELAQMKHETQVFRLFMS.

Belongs to the UreF family. In terms of assembly, ureD, UreF and UreG form a complex that acts as a GTP-hydrolysis-dependent molecular chaperone, activating the urease apoprotein by helping to assemble the nickel containing metallocenter of UreC. The UreE protein probably delivers the nickel.

It is found in the cytoplasm. Its function is as follows. Required for maturation of urease via the functional incorporation of the urease nickel metallocenter. This Streptococcus salivarius (strain 57.I) protein is Urease accessory protein UreF.